The sequence spans 387 residues: Alkanesulfonate monooxygenase (387 aa).

This sequence belongs to the SsuD family.

It catalyses the reaction an alkanesulfonate + FMNH2 + O2 = an aldehyde + FMN + sulfite + H2O + 2 H(+). Catalyzes the desulfonation of aliphatic sulfonates. This Cupriavidus metallidurans (strain ATCC 43123 / DSM 2839 / NBRC 102507 / CH34) (Ralstonia metallidurans) protein is Alkanesulfonate monooxygenase.